The sequence spans 216 residues: Phosphoenolpyruvate guanylyltransferase (216 aa).

Phosphoenolpyruvate contacts are provided by Thr150, Gly165, and Ser168.

This sequence belongs to the CofC family.

The catalysed reaction is phosphoenolpyruvate + GTP + H(+) = enolpyruvoyl-2-diphospho-5'-guanosine + diphosphate. The protein operates within cofactor biosynthesis; coenzyme F420 biosynthesis. Its function is as follows. Guanylyltransferase that catalyzes the activation of phosphoenolpyruvate (PEP) as enolpyruvoyl-2-diphospho-5'-guanosine, via the condensation of PEP with GTP. It is involved in the biosynthesis of coenzyme F420, a hydride carrier cofactor. The chain is Phosphoenolpyruvate guanylyltransferase from Mycobacterium leprae (strain Br4923).